A 304-amino-acid chain; its full sequence is Phosphatidylserine decarboxylase proenzyme (304 aa).

Catalysis depends on charge relay system; for autoendoproteolytic cleavage activity residues aspartate 90, histidine 147, and serine 253. Serine 253 acts as the Schiff-base intermediate with substrate; via pyruvic acid; for decarboxylase activity in catalysis. Serine 253 carries the post-translational modification Pyruvic acid (Ser); by autocatalysis.

It belongs to the phosphatidylserine decarboxylase family. PSD-B subfamily. Prokaryotic type I sub-subfamily. Heterodimer of a large membrane-associated beta subunit and a small pyruvoyl-containing alpha subunit. Pyruvate serves as cofactor. In terms of processing, is synthesized initially as an inactive proenzyme. Formation of the active enzyme involves a self-maturation process in which the active site pyruvoyl group is generated from an internal serine residue via an autocatalytic post-translational modification. Two non-identical subunits are generated from the proenzyme in this reaction, and the pyruvate is formed at the N-terminus of the alpha chain, which is derived from the carboxyl end of the proenzyme. The autoendoproteolytic cleavage occurs by a canonical serine protease mechanism, in which the side chain hydroxyl group of the serine supplies its oxygen atom to form the C-terminus of the beta chain, while the remainder of the serine residue undergoes an oxidative deamination to produce ammonia and the pyruvoyl prosthetic group on the alpha chain. During this reaction, the Ser that is part of the protease active site of the proenzyme becomes the pyruvoyl prosthetic group, which constitutes an essential element of the active site of the mature decarboxylase.

Its subcellular location is the cell membrane. It carries out the reaction a 1,2-diacyl-sn-glycero-3-phospho-L-serine + H(+) = a 1,2-diacyl-sn-glycero-3-phosphoethanolamine + CO2. It functions in the pathway phospholipid metabolism; phosphatidylethanolamine biosynthesis; phosphatidylethanolamine from CDP-diacylglycerol: step 2/2. In terms of biological role, catalyzes the formation of phosphatidylethanolamine (PtdEtn) from phosphatidylserine (PtdSer). This is Phosphatidylserine decarboxylase proenzyme from Dickeya dadantii (strain 3937) (Erwinia chrysanthemi (strain 3937)).